The following is a 214-amino-acid chain: uncharacterized protein (214 aa).

2 consecutive CBS domains span residues 7–65 and 69–129; these read MDKN…KKPI and MRPV…EIPV.

This is an uncharacterized protein from Methanocaldococcus jannaschii (strain ATCC 43067 / DSM 2661 / JAL-1 / JCM 10045 / NBRC 100440) (Methanococcus jannaschii).